Consider the following 1073-residue polypeptide: Pharyngeal muscle protein 2 (1073 aa).

Positions 9–43 (INDLRVSELKTELEKRGLSTQGVKVVLTVRLNKAL) constitute an SAP domain. Disordered stretches follow at residues 59 to 186 (VSPM…PEVV), 207 to 305 (ELKE…SMET), and 337 to 388 (LLED…KSML). Residues 91 to 111 (EGNDENVLVEEKEEEEEEEDS) show a composition bias toward acidic residues. Basic and acidic residues predominate over residues 112-127 (HDLQIIEDHELEVPSD). The segment covering 128 to 151 (EKDDTLVEDEEFEEAEQVEPEPEA) has biased composition (acidic residues). 2 stretches are compositionally biased toward basic and acidic residues: residues 156 to 182 (VEEKPEEKLEEKPEEKLEEKPEEKPVE) and 207 to 217 (ELKEKPEKEPE). 2 stretches are compositionally biased toward acidic residues: residues 223 to 232 (EPVEQLENEP) and 248 to 265 (QDGEDEFEEDDSSSDIEI). The segment covering 277–293 (AEEKVEKKEKKPEEIPH) has biased composition (basic and acidic residues). A compositionally biased stretch (low complexity) spans 366-386 (ASTPQATPSKAASSSAGSGKS). The 83-residue stretch at 396-478 (TSIWIRGMTP…RVLRVEKVSE (83 aa)) folds into the RRM domain. Disordered regions lie at residues 481–759 (LTSS…ERRR), 845–917 (QEHR…RNLV), and 1015–1073 (SQNA…RGNY). 2 stretches are compositionally biased toward low complexity: residues 496 to 505 (EAASTMSTSP) and 513 to 524 (PVVTTTTTTSAA). The segment covering 573–587 (ITFDREEESNRDSRR) has biased composition (basic and acidic residues). The segment covering 588–622 (TIAAAPPARTSRMARSPLRAPLRAARGSESSRSST) has biased composition (low complexity). The span at 674-689 (VTVQQDAPRASYQTEQ) shows a compositional bias: polar residues. 2 stretches are compositionally biased toward basic and acidic residues: residues 707 to 727 (VSPDRSEQRRHRDEPPPRRAP) and 742 to 759 (PPRRQEGARRSEEPERRR). Low complexity-rich tracts occupy residues 901 to 917 (SSSNSNRNSNSGGRNLV), 1015 to 1026 (SQNAATPSTSTS), and 1034 to 1060 (QWQQQSYGSNQHQHHQNNNSSQPSSSN).

Expressed in most tissues including the hypodermal, muscle, neuronal, vulval and intestinal tissues. Isoform a: Expressed in the pharynx, nerve ring, intestine, neurons and ventral nerve cord.

It localises to the nucleus. In terms of biological role, involved in pharyngeal muscle development and ensures pharyngeal grinder function during feeding. Plays a role in the defense against the accumulation of ingested live pathogenic bacteria in the intestine. Has a role in the determination of life span. The chain is Pharyngeal muscle protein 2 from Caenorhabditis elegans.